The primary structure comprises 383 residues: BRISC and BRCA1-A complex member 2 (383 aa).

UEV-like regions lie at residues 30–147 (DATN…TLLE) and 275–364 (IAAF…RAKA).

It belongs to the BABAM2 family. Component of the ARISC complex, at least composed of UIMC1/RAP80, ABRAXAS1, BRCC3/BRCC36, BABAM2 and BABAM1/NBA1. Component of the BRCA1-A complex, at least composed of BRCA1, BARD1, UIMC1/RAP80, ABRAXAS1, BRCC3/BRCC36, BABAM2 and BABAM1/NBA1. In the BRCA1-A complex, interacts directly with ABRAXAS1, BRCC3/BRCC36 and BABAM1/NBA1. Binds polyubiquitin. Component of the BRISC complex, at least composed of ABRAXAS2, BRCC3/BRCC36, BABAM2 and BABAM1/NBA1. Identified in a complex with SHMT2 and the other subunits of the BRISC complex. Component of the BRCA1/BRCA2 containing complex (BRCC), which also contains BRCA1, BRCA2, BARD1, BRCC3/BRCC36 and RAD51. BRCC is a ubiquitin E3 ligase complex that enhances cellular survival following DNA damage. May interact with FAS and TNFRSF1A.

It localises to the cytoplasm. The protein resides in the nucleus. Component of the BRCA1-A complex, a complex that specifically recognizes 'Lys-63'-linked ubiquitinated histones H2A and H2AX at DNA lesions sites, leading to target the BRCA1-BARD1 heterodimer to sites of DNA damage at double-strand breaks (DSBs). The BRCA1-A complex also possesses deubiquitinase activity that specifically removes 'Lys-63'-linked ubiquitin on histones H2A and H2AX. In the BRCA1-A complex, it acts as an adapter that bridges the interaction between BABAM1/NBA1 and the rest of the complex, thereby being required for the complex integrity and modulating the E3 ubiquitin ligase activity of the BRCA1-BARD1 heterodimer. Component of the BRISC complex, a multiprotein complex that specifically cleaves 'Lys-63'-linked ubiquitin in various substrates. Within the BRISC complex, acts as an adapter that bridges the interaction between BABAM1/NBA1 and the rest of the complex, thereby being required for the complex integrity. The BRISC complex is required for normal mitotic spindle assembly and microtubule attachment to kinetochores via its role in deubiquitinating NUMA1. The BRISC complex plays a role in interferon signaling via its role in the deubiquitination of the interferon receptor IFNAR1; deubiquitination increases IFNAR1 activity by enhancing its stability and cell surface expression. Down-regulates the response to bacterial lipopolysaccharide (LPS) via its role in IFNAR1 deubiquitination. May play a role in homeostasis or cellular differentiation in cells of neural, epithelial and germline origins. May also act as a death receptor-associated anti-apoptotic protein, which inhibits the mitochondrial apoptotic pathway. May regulate TNF-alpha signaling through its interactions with TNFRSF1A; however these effects may be indirect. This chain is BRISC and BRCA1-A complex member 2 (BABAM2), found in Gallus gallus (Chicken).